A 179-amino-acid chain; its full sequence is Apoptosis regulator Bcl-2 homolog (179 aa).

The BH1 motif lies at 76–95; sequence ELFKDLINWGRICGFIVFSA. The short motif at 126 to 141 is the BH2 element; it reads PWMISHGGQEEFLAFS.

The protein belongs to the Bcl-2 family. As to quaternary structure, interacts with host BECN1 (via BH3 homology domain); this interaction allows the virus to inhibit BECN1, and thus autophagy. Interacts with host BID. Interacts with host BAX.

It is found in the host mitochondrion. It localises to the host endoplasmic reticulum. Its function is as follows. Suppresses apoptosis in host cell to promote the viral replication. Has the ability to potentially bind to all the members of the proapoptotic Bcl-2 family. Inhibits autophagy by interacting with host Beclin 1 (BECN1). This Ornithodoros (relapsing fever ticks) protein is Apoptosis regulator Bcl-2 homolog.